The following is a 210-amino-acid chain: Protein VNG_2543C (210 aa).

The AMMECR1 domain maps to 12 to 206 (EDGARTVELA…ETGDEDDPVE (195 aa)).

In Halobacterium salinarum (strain ATCC 700922 / JCM 11081 / NRC-1) (Halobacterium halobium), this protein is Protein VNG_2543C.